Reading from the N-terminus, the 769-residue chain is Bifunctional glycosyltransferase pgtA (769 aa).

The tract at residues 25 to 210 (YQGINNLIIS…SVIFKRSIFT (186 aa)) is N-acetylgalactosamine 3-beta-galactosyltransferase. Residues 410 to 441 (NNINNNNNNNNNNNNNNNNNNNNNNNNNNNNN) show a composition bias toward low complexity. The segment at 410 to 442 (NNINNNNNNNNNNNNNNNNNNNNNNNNNNNNNS) is disordered. The alpha-1,2-fucosyltransferase stretch occupies residues 442-769 (SILNFISGIN…SVHIGELFIS (328 aa)).

This sequence belongs to the glycosyltransferase 2 family.

The catalysed reaction is an N-acetyl-beta-D-glucosaminyl derivative + UDP-alpha-D-galactose = a beta-D-galactosyl-(1-&gt;3)-N-acetyl-beta-D-glucosaminyl derivative + UDP + H(+). It carries out the reaction a beta-D-galactosyl-(1-&gt;3)-N-acetyl-beta-D-glucosaminyl derivative + GDP-beta-L-fucose = an alpha-L-Fuc-(1-&gt;2)-beta-D-Gal-(1-&gt;3)-beta-D-GlcNAc derivative + GDP + H(+). In terms of biological role, bifunctional protein composed of 2 glycosyltransferase domains involved in glycosylating skp1. The N-terminal part catalyzes the transfer of a galactose residue to GlcNAc-skp1 in a beta 1-3 linkage. The C-terminal part catalyzes the transfer of a fucose residue to Gal-GlcNAc-skp1 in an alpha 1-2 linkage. This is Bifunctional glycosyltransferase pgtA (pgtA) from Dictyostelium discoideum (Social amoeba).